The sequence spans 136 residues: uncharacterized protein (136 aa).

The interval 1 to 33 is disordered; sequence MRDHLPPGLPPDPFADDPCDPSAALEAVEPGQP.

This sequence to M.leprae ML0386.

This is an uncharacterized protein from Mycobacterium tuberculosis (strain CDC 1551 / Oshkosh).